A 271-amino-acid chain; its full sequence is Vacuolar arginine/histidine antiporter stm1 (271 aa).

Positions 14 to 80 (LTELSSFLGA…GNVSSTVLVL (67 aa)) constitute a PQ-loop 1 domain. 3 helical membrane passes run 17-37 (LSSF…IPQL), 49-69 (ISDL…LGSI), and 77-97 (VLVL…QIYY). Position 119 is a phosphoserine (S119). 4 helical membrane-spanning segments follow: residues 144-164 (FGVM…IISS), 178-198 (PFTA…PQII), 211-231 (IIFF…ILVF), and 245-265 (PWIL…YQFI). In terms of domain architecture, PQ-loop 2 spans 185-239 (SSVLYFCARIPQIIKNHKAKSTEGLSIIFFVLASVGNTSYAFSILVFPASDYLNY).

Belongs to the laat-1 family.

Its subcellular location is the vacuole membrane. The enzyme catalyses L-histidine(out) + L-arginine(in) = L-histidine(in) + L-arginine(out). Its function is as follows. Amino acid transporter that moves basic amino acids across the vacuolar membrane. Appears to function as an arginine/histidine antiporter. The chain is Vacuolar arginine/histidine antiporter stm1 (stm1) from Schizosaccharomyces pombe (strain 972 / ATCC 24843) (Fission yeast).